Here is a 365-residue protein sequence, read N- to C-terminus: uncharacterized protein (365 aa).

The region spanning 45-289 is the Radical SAM core domain; it reads FSIGKSLTII…LKEVKKSNPK (245 aa). The [4Fe-4S] cluster site is built by Cys60, Cys68, and Cys71.

It depends on [4Fe-4S] cluster as a cofactor.

This is an uncharacterized protein from Methanocaldococcus jannaschii (strain ATCC 43067 / DSM 2661 / JAL-1 / JCM 10045 / NBRC 100440) (Methanococcus jannaschii).